The primary structure comprises 1360 residues: Transmembrane protein 94 (1360 aa).

The Cytoplasmic segment spans residues 1–64 (MDLREKHLGE…FLHLSNRCSC (64 aa)). Residues 65 to 85 (FHWPGASLMLLAVLLLLCCCG) form a helical membrane-spanning segment. Over 86–92 (GQPAGSQ) the chain is Lumenal. The chain crosses the membrane as a helical span at residues 93–113 (GVELVNASALFLLLLLNLVLI). Topologically, residues 114-273 (GRQDRLKRRE…RPVTALDNER (160 aa)) are cytoplasmic. Phosphoserine occurs at positions 221 and 225. Residues 274–294 (FTVQSVMLHYAVPVVLAGFLI) form a helical membrane-spanning segment. Residues 295-320 (TNALRFMFKAPGVTSWQYTLLQLQVN) are Lumenal-facing. The chain crosses the membrane as a helical span at residues 321-341 (GMLPILPLLFPVLWVLATACG). The Cytoplasmic portion of the chain corresponds to 342–1096 (EARVLAQMSK…RHATYGIRKC (755 aa)). Positions 417 to 422 (DKQGIL) match the DKQGIL motif. Residues Ser-444, Ser-445, and Ser-454 each carry the phosphoserine modification. The tract at residues 487–545 (EQERSDWLADGPKPSEPYPHHKGHGRSKHPSGSNVSFSRDTEGGEEEPSKAQPGTEGDP) is disordered. Basic residues predominate over residues 506–515 (HHKGHGRSKH). Ser-517, Ser-522, Ser-802, and Ser-945 each carry phosphoserine. A helical membrane pass occupies residues 1097 to 1117 (FLFLLQCQLTLVVIQFLSCLV). Over 1118–1124 (QLPPLLS) the chain is Lumenal. Residues 1125–1145 (TTDILWLSCFCYPLLSISLLG) traverse the membrane as a helical segment. Residues 1146-1171 (KPPHSSIMSMATGKNLQSIPKKTQHY) lie on the Cytoplasmic side of the membrane. Residues 1172–1192 (FLLCFLLKFSLTISSCLVCFG) traverse the membrane as a helical segment. The Lumenal segment spans residues 1193-1232 (FTLQSFCDSARARNLTNCSSVMLCSNDDRAPAWFEDFANG). N-linked (GlcNAc...) asparagine glycosylation is found at Asn-1206 and Asn-1209. Residues 1233–1253 (LLSAQKLTAALIVLHTVFISI) form a helical membrane-spanning segment. Topologically, residues 1254-1269 (THVHRTKPLWRKSPLT) are cytoplasmic. The helical transmembrane segment at 1270-1290 (NLWWAVTVPVVLLGQVVQTVV) threads the bilayer. Over 1291–1310 (DLQLWTHRDSRVHFGLEDVP) the chain is Lumenal. The helical transmembrane segment at 1311-1331 (LLTWLLGCLSLVLVVVTNEIV) threads the bilayer. The Cytoplasmic segment spans residues 1332–1360 (KLHEIRVRVRYQKRQKLQFETKLGMNSPF). The GMN; metal-binding motif signature appears at 1355–1357 (GMN).

In terms of assembly, forms homooligomers.

The protein localises to the endoplasmic reticulum membrane. In terms of biological role, could function in the uptake of Mg(2+) from the cytosol into the endoplasmic reticulum and regulate intracellular Mg(2+) homeostasis. In Mus musculus (Mouse), this protein is Transmembrane protein 94.